A 360-amino-acid polypeptide reads, in one-letter code: Phospho-N-acetylmuramoyl-pentapeptide-transferase (360 aa).

The next 10 membrane-spanning stretches (helical) occupy residues arginine 24–isoleucine 44, glycine 69–tryptophan 89, tryptophan 92–phenylalanine 112, methionine 133–asparagine 153, isoleucine 158–valine 178, glycine 199–serine 219, valine 239–tyrosine 259, valine 263–isoleucine 283, phenylalanine 288–valine 308, and glutamine 337–leucine 357.

Belongs to the glycosyltransferase 4 family. MraY subfamily. Mg(2+) serves as cofactor.

It is found in the cell inner membrane. The enzyme catalyses UDP-N-acetyl-alpha-D-muramoyl-L-alanyl-gamma-D-glutamyl-meso-2,6-diaminopimeloyl-D-alanyl-D-alanine + di-trans,octa-cis-undecaprenyl phosphate = di-trans,octa-cis-undecaprenyl diphospho-N-acetyl-alpha-D-muramoyl-L-alanyl-D-glutamyl-meso-2,6-diaminopimeloyl-D-alanyl-D-alanine + UMP. Its pathway is cell wall biogenesis; peptidoglycan biosynthesis. In terms of biological role, catalyzes the initial step of the lipid cycle reactions in the biosynthesis of the cell wall peptidoglycan: transfers peptidoglycan precursor phospho-MurNAc-pentapeptide from UDP-MurNAc-pentapeptide onto the lipid carrier undecaprenyl phosphate, yielding undecaprenyl-pyrophosphoryl-MurNAc-pentapeptide, known as lipid I. This is Phospho-N-acetylmuramoyl-pentapeptide-transferase from Neisseria meningitidis serogroup C / serotype 2a (strain ATCC 700532 / DSM 15464 / FAM18).